A 432-amino-acid chain; its full sequence is Putative transposase A625R (432 aa).

Zn(2+) contacts are provided by Cys-375, Cys-378, Cys-393, and Cys-395.

This sequence in the N-terminal section; belongs to the transposase 2 family. In the C-terminal section; belongs to the transposase 35 family.

The chain is Putative transposase A625R from Chlorella (PBCV-1).